The chain runs to 146 residues: P antigen family member 1 (146 aa).

The disordered stretch occupies residues 16–146; it reads YVESSEESSD…PEEDEGQSQP (131 aa). Acidic residues predominate over residues 19-32; sequence SSEESSDEQPDEVE. Residue Ser63 is modified to Phosphoserine. Residues 79-92 are compositionally biased toward basic and acidic residues; it reads PDTKRVCLRNEEQM. Ser105 bears the Phosphoserine mark. Positions 107–120 are enriched in basic and acidic residues; that stretch reads EQVHPKTGCERGDG. Ser144 carries the phosphoserine modification.

Belongs to the GAGE family. Isolated from prostate cancer cell lines; expression associated with progression to androgen insensitive phenotype. Expressed in normal testis and at lower level in normal placenta.

This Homo sapiens (Human) protein is P antigen family member 1 (PAGE1).